Reading from the N-terminus, the 144-residue chain is Large ribosomal subunit protein uL16 (144 aa).

The protein belongs to the universal ribosomal protein uL16 family. As to quaternary structure, part of the 50S ribosomal subunit.

Its function is as follows. Binds 23S rRNA and is also seen to make contacts with the A and possibly P site tRNAs. The protein is Large ribosomal subunit protein uL16 of Listeria innocua serovar 6a (strain ATCC BAA-680 / CLIP 11262).